Consider the following 285-residue polypeptide: uncharacterized protein (285 aa).

Residues 6–26 (IKYFSTIIVAVVAVLAGWWLW) form a helical membrane-spanning segment.

The protein belongs to the membrane fusion protein (MFP) (TC 8.A.1) family.

It is found in the membrane. This is an uncharacterized protein from Escherichia coli (strain K12).